The following is a 140-amino-acid chain: Ribosome-binding factor A (140 aa).

Positions 1 to 23 are disordered; the sequence is MLRDRNRSGVRGGAEGPSQRQRR.

Belongs to the RbfA family. Monomer. Binds 30S ribosomal subunits, but not 50S ribosomal subunits or 70S ribosomes.

It localises to the cytoplasm. In terms of biological role, one of several proteins that assist in the late maturation steps of the functional core of the 30S ribosomal subunit. Associates with free 30S ribosomal subunits (but not with 30S subunits that are part of 70S ribosomes or polysomes). Required for efficient processing of 16S rRNA. May interact with the 5'-terminal helix region of 16S rRNA. This chain is Ribosome-binding factor A, found in Acidiphilium cryptum (strain JF-5).